The chain runs to 118 residues: Small ribosomal subunit protein uS13 (118 aa).

A disordered region spans residues 94–118; sequence SLPLRGQRTKTNARTRKGPRKPIKK.

Belongs to the universal ribosomal protein uS13 family. As to quaternary structure, part of the 30S ribosomal subunit. Forms a loose heterodimer with protein S19. Forms two bridges to the 50S subunit in the 70S ribosome.

Its function is as follows. Located at the top of the head of the 30S subunit, it contacts several helices of the 16S rRNA. In the 70S ribosome it contacts the 23S rRNA (bridge B1a) and protein L5 of the 50S subunit (bridge B1b), connecting the 2 subunits; these bridges are implicated in subunit movement. Contacts the tRNAs in the A and P-sites. In Alteromonas mediterranea (strain DSM 17117 / CIP 110805 / LMG 28347 / Deep ecotype), this protein is Small ribosomal subunit protein uS13.